The sequence spans 515 residues: Maturase K (515 aa).

Belongs to the intron maturase 2 family. MatK subfamily.

The protein localises to the plastid. It localises to the chloroplast. In terms of biological role, usually encoded in the trnK tRNA gene intron. Probably assists in splicing its own and other chloroplast group II introns. The chain is Maturase K from Trillium pusillum (Dwarf wakerobin).